A 373-amino-acid chain; its full sequence is Probable tRNA sulfurtransferase (373 aa).

The 105-residue stretch at 54 to 158 (NKNIEELSKV…NDVAYFYHKI (105 aa)) folds into the THUMP domain. Residues 176 to 177 (LF), 201 to 202 (NF), K256, G278, and Q287 contribute to the ATP site.

This sequence belongs to the ThiI family.

It is found in the cytoplasm. It catalyses the reaction [ThiI sulfur-carrier protein]-S-sulfanyl-L-cysteine + a uridine in tRNA + 2 reduced [2Fe-2S]-[ferredoxin] + ATP + H(+) = [ThiI sulfur-carrier protein]-L-cysteine + a 4-thiouridine in tRNA + 2 oxidized [2Fe-2S]-[ferredoxin] + AMP + diphosphate. It carries out the reaction [ThiS sulfur-carrier protein]-C-terminal Gly-Gly-AMP + S-sulfanyl-L-cysteinyl-[cysteine desulfurase] + AH2 = [ThiS sulfur-carrier protein]-C-terminal-Gly-aminoethanethioate + L-cysteinyl-[cysteine desulfurase] + A + AMP + 2 H(+). The protein operates within cofactor biosynthesis; thiamine diphosphate biosynthesis. Catalyzes the ATP-dependent transfer of a sulfur to tRNA to produce 4-thiouridine in position 8 of tRNAs, which functions as a near-UV photosensor. Also catalyzes the transfer of sulfur to the sulfur carrier protein ThiS, forming ThiS-thiocarboxylate. This is a step in the synthesis of thiazole, in the thiamine biosynthesis pathway. The sulfur is donated as persulfide by IscS. This is Probable tRNA sulfurtransferase from Saccharolobus islandicus (strain M.16.4 / Kamchatka #3) (Sulfolobus islandicus).